The chain runs to 411 residues: Peptide chain release factor subunit 1 (411 aa).

Belongs to the eukaryotic release factor 1 family. Heterodimer of two subunits, one of which binds GTP.

The protein localises to the cytoplasm. Functionally, directs the termination of nascent peptide synthesis (translation) in response to the termination codons UAA, UAG and UGA. The chain is Peptide chain release factor subunit 1 from Methanosphaera stadtmanae (strain ATCC 43021 / DSM 3091 / JCM 11832 / MCB-3).